A 316-amino-acid chain; its full sequence is DnaJ homolog subfamily B member 13 (316 aa).

In terms of domain architecture, J spans 4–68 (DYYSVLGITR…MKRGIYDKFG (65 aa)).

Homodimer. Component of the axonemal radial spoke complex 1 (RS1), at least composed of spoke head proteins RSPH1, RSPH3, RSPH9 and the cilia-specific component RSPH4A or sperm-specific component RSPH6A, spoke stalk proteins RSPH14, DNAJB13, DYDC1, ROPN1L and NME5, and the anchor protein IQUB. Interacts with SUN5. Interacts with IQUB. In terms of tissue distribution, specifically expressed in testis and trachea.

The protein resides in the cell projection. Its subcellular location is the cilium. It is found in the flagellum. Its function is as follows. Functions as part of axonemal radial spoke complexes that play an important part in the motility of sperm and cilia. The polypeptide is DnaJ homolog subfamily B member 13 (DNAJB13) (Homo sapiens (Human)).